Here is a 397-residue protein sequence, read N- to C-terminus: Cytochrome b (397 aa).

The next 4 helical transmembrane spans lie at 38–58, 82–104, 119–139, and 185–205; these read FGSL…FLAM, WLLR…LHIF, VWCL…IGYV, and FFSL…LHLA. Heme b contacts are provided by His88 and His102. 2 residues coordinate heme b: His189 and His203. Position 208 (His208) interacts with a ubiquinone. The next 4 helical transmembrane spans lie at 231–251, 295–315, 327–347, and 354–373; these read FYVK…IWIF, AGGV…PFFK, IYQG…WIGC, and FVTI…AITP.

The protein belongs to the cytochrome b family. The main subunits of complex b-c1 are: cytochrome b, cytochrome c1 and the Rieske protein. Requires heme b as cofactor.

It localises to the mitochondrion inner membrane. Component of the ubiquinol-cytochrome c reductase complex (complex III or cytochrome b-c1 complex) that is part of the mitochondrial respiratory chain. The b-c1 complex mediates electron transfer from ubiquinol to cytochrome c. Contributes to the generation of a proton gradient across the mitochondrial membrane that is then used for ATP synthesis. This is Cytochrome b (MT-CYB) from Oryza sativa subsp. japonica (Rice).